The following is a 298-amino-acid chain: Nucleotide-binding protein MAV_3359 (298 aa).

18–25 (GLSGAGRG) contacts ATP. 69 to 72 (DVRS) lines the GTP pocket.

Belongs to the RapZ-like family.

Displays ATPase and GTPase activities. This Mycobacterium avium (strain 104) protein is Nucleotide-binding protein MAV_3359.